A 191-amino-acid chain; its full sequence is Small ribosomal subunit protein eS7 (191 aa).

Methionine 1 is subject to N-acetylmethionine.

Belongs to the eukaryotic ribosomal protein eS7 family.

This is Small ribosomal subunit protein eS7 (RPS7) from Brassica oleracea (Wild cabbage).